The chain runs to 556 residues: 2-succinyl-5-enolpyruvyl-6-hydroxy-3-cyclohexene-1-carboxylate synthase (556 aa).

The protein belongs to the TPP enzyme family. MenD subfamily. As to quaternary structure, homodimer. The cofactor is Mg(2+). Requires Mn(2+) as cofactor. It depends on thiamine diphosphate as a cofactor.

The enzyme catalyses isochorismate + 2-oxoglutarate + H(+) = 5-enolpyruvoyl-6-hydroxy-2-succinyl-cyclohex-3-ene-1-carboxylate + CO2. It functions in the pathway quinol/quinone metabolism; 1,4-dihydroxy-2-naphthoate biosynthesis; 1,4-dihydroxy-2-naphthoate from chorismate: step 2/7. It participates in quinol/quinone metabolism; menaquinone biosynthesis. Its function is as follows. Catalyzes the thiamine diphosphate-dependent decarboxylation of 2-oxoglutarate and the subsequent addition of the resulting succinic semialdehyde-thiamine pyrophosphate anion to isochorismate to yield 2-succinyl-5-enolpyruvyl-6-hydroxy-3-cyclohexene-1-carboxylate (SEPHCHC). The protein is 2-succinyl-5-enolpyruvyl-6-hydroxy-3-cyclohexene-1-carboxylate synthase of Escherichia coli (strain K12 / MC4100 / BW2952).